Consider the following 147-residue polypeptide: Nitric oxide reductase subunit C (147 aa).

A helical; Signal-anchor membrane pass occupies residues 13-29 (VFYGGSLFFIAVFVGLT). Heme c-binding residues include Cys-59, Cys-62, and His-63.

In terms of assembly, heterodimer of cytochromes b (large subunit) and c (small subunit).

The protein resides in the cell membrane. Its function is as follows. Component of the anaerobic respiratory chain that transforms nitrate to dinitrogen (denitrification). In Cereibacter sphaeroides (strain ATCC 17025 / ATH 2.4.3) (Rhodobacter sphaeroides), this protein is Nitric oxide reductase subunit C (norC).